A 375-amino-acid chain; its full sequence is Succinyl-diaminopimelate desuccinylase (375 aa).

His66 is a Zn(2+) binding site. Residue Asp68 is part of the active site. Zn(2+) is bound at residue Asp99. The active-site Proton acceptor is the Glu133. Zn(2+) is bound by residues Glu134, Glu162, and His348.

Belongs to the peptidase M20A family. DapE subfamily. In terms of assembly, homodimer. The cofactor is Zn(2+). Co(2+) serves as cofactor.

It carries out the reaction N-succinyl-(2S,6S)-2,6-diaminopimelate + H2O = (2S,6S)-2,6-diaminopimelate + succinate. The protein operates within amino-acid biosynthesis; L-lysine biosynthesis via DAP pathway; LL-2,6-diaminopimelate from (S)-tetrahydrodipicolinate (succinylase route): step 3/3. Functionally, catalyzes the hydrolysis of N-succinyl-L,L-diaminopimelic acid (SDAP), forming succinate and LL-2,6-diaminopimelate (DAP), an intermediate involved in the bacterial biosynthesis of lysine and meso-diaminopimelic acid, an essential component of bacterial cell walls. This Cronobacter sakazakii (strain ATCC BAA-894) (Enterobacter sakazakii) protein is Succinyl-diaminopimelate desuccinylase.